A 228-amino-acid polypeptide reads, in one-letter code: DNA mismatch repair protein MutH (228 aa).

Belongs to the MutH family.

Its subcellular location is the cytoplasm. Sequence-specific endonuclease that cleaves unmethylated GATC sequences. It is involved in DNA mismatch repair. The protein is DNA mismatch repair protein MutH of Serratia proteamaculans (strain 568).